Here is a 279-residue protein sequence, read N- to C-terminus: Methyltransferase ausD (279 aa).

Residues 124 to 125 (DI) and 152 to 153 (DV) each bind S-adenosyl-L-methionine.

It belongs to the class I-like SAM-binding methyltransferase superfamily. In terms of assembly, homodimer.

Its pathway is secondary metabolite biosynthesis; terpenoid biosynthesis. Functionally, methyltransferase; part of the gene cluster A that mediates the biosynthesis of the fungal meroterpenoid acetoxydehydroaustin. The first step of the pathway is the synthesis of 3,5-dimethylorsellinic acid by the polyketide synthase ausA. 3,5-dimethylorsellinic acid is then prenylated by the polyprenyl transferase ausN. Further epoxidation by the FAD-dependent monooxygenase ausM and cyclization by the probable terpene cyclase ausL lead to the formation of protoaustinoid A. Protoaustinoid A is then oxidized to spiro-lactone preaustinoid A3 by the combined action of the FAD-binding monooxygenases ausB and ausC, and the dioxygenase ausE. Acid-catalyzed keto-rearrangement and ring contraction of the tetraketide portion of preaustinoid A3 by ausJ lead to the formation of preaustinoid A4. The aldo-keto reductase ausK, with the help of ausH, is involved in the next step by transforming preaustinoid A4 into isoaustinone which is in turn hydroxylated by the P450 monooxygenase ausI to form austinolide. The cytochrome P450 monooxygenase ausG then modifies austinolide to austinol. Austinol is further acetylated to austin by the O-acetyltransferase ausP, which spontaneously changes to dehydroaustin. The cytochrome P450 monooxygenase then converts dehydroaustin is into 7-dehydrodehydroaustin. The hydroxylation catalyzed by ausR permits the second O-acetyltransferase ausQ to add an additional acetyl group to the molecule, leading to the formation of acetoxydehydroaustin. Due to genetic rearrangements of the clusters and the subsequent loss of some enzymes, the end product of the Penicillium brasilianum austinoid biosynthesis clusters is acetoxydehydroaustin. The protein is Methyltransferase ausD of Penicillium brasilianum.